The primary structure comprises 373 residues: Inhibitor of nuclear factor kappa-B kinase-interacting protein (373 aa).

Residues 1–11 (MSEVKSRKKPG) show a composition bias toward basic residues. The interval 1–38 (MSEVKSRKKPGPKVAAPEPEKRSDGRKNPEARGDAGWA) is disordered. The segment covering 18–33 (EPEKRSDGRKNPEARG) has biased composition (basic and acidic residues). Residues 43–59 (GLSLLSLAMTLGLAWLV) form a helical membrane-spanning segment. Coiled coils occupy residues 86-257 (LQSK…NKLS) and 285-324 (QDLIGTERKMEELTMQMFNMEDDMLRAVSEIMEMQKTLEG). Asn151 carries an N-linked (GlcNAc...) asparagine glycan.

N-glycosylated at Asn-151.

Its subcellular location is the endoplasmic reticulum membrane. Target of p53/TP53 with pro-apoptotic function. The protein is Inhibitor of nuclear factor kappa-B kinase-interacting protein (Ikbip) of Mus musculus (Mouse).